A 396-amino-acid polypeptide reads, in one-letter code: Beta-peptidyl aminopeptidase BapA (396 aa).

Residues 1–21 (MHYLKFPAIIAGMLLAGAASA) form the signal peptide. S271 functions as the Nucleophile in the catalytic mechanism. Residues S309 and D311 each act as proton donor/acceptor in the active site.

The protein belongs to the peptidase S58 family. In terms of assembly, heterooctamer of 4 heterodimers ((alpha:beta)4); each heterodimer is composed of an alpha subunit and a beta subunit processed from the same precursor. Post-translationally, autoproteolytic processing to generate the alpha and beta subunit is required for self-activation and is proposed to use a similar mechanism as substrate cleavage.

The protein localises to the periplasm. The enzyme catalyses Cleaves N-terminal beta-homoamino acids from peptides composed of 2 to 6 amino acids.. Its activity is regulated as follows. Inhibited by AEBSF (4-(2-aminoethyl)benzenesulfonyl fluoride, Pefabloc SC). Functionally, beta-aminopeptidase that can cleave synthetic beta-peptides which consist of backbone-elongated beta-amino acid residues that are not processed by common proteolytic enzymes. Can cleave the beta-peptides beta-homoVal-beta-homoAla-beta-homoLeu and beta-homoAla-beta-homoLeu. Requires a beta-amino acid at the N-terminus of peptide substrates and cleaves the peptide bond between the N-terminal beta-amino acid and the amino acid at the second position of tripeptidic substrates of the general structure H-betahXaa-Ile-betahTyr-OH according to the following preferences with regard to the side chain of the N-terminal beta-amino acid: aliphatic and aromatic &gt; OH-containing &gt; hydrogen, basic and polar. beta-homoVal-beta-homoAla-beta-homoLeu and beta-homoAla-beta-homoLeu. In Sphingosinicella microcystinivorans, this protein is Beta-peptidyl aminopeptidase BapA.